The chain runs to 162 residues: Epoxidase pydX (162 aa).

A signal peptide spans 1-26 (MSLIALPLRLLRLLPAITSTWVLAFA). 2 helical membrane passes run 62–82 (WILIVVYPINYALGVVNLFVG) and 89–109 (TGAMSWYTIGLLFSLAHMGYM). N-linked (GlcNAc...) asparagine glycans are attached at residues N127 and N139.

Belongs to the epoxidase xenD family.

The protein localises to the membrane. Its pathway is mycotoxin biosynthesis. Its function is as follows. Epoxidase; part of the gene cluster that mediates the biosynthesis of pyrrocidines, fungal natural products containing a macrocyclic para-cyclophane connected to a decahydrofluorene ring system that show potent antibiotic activities toward Gram-negative bacteria. Within the pathway, pydX functions synergistically with pydB, pydE and pydZ to form the cyclophane. The pathway begins with the PKS-NRPS pydA which, with the help of the trans-enoyl reductase pydC, synthesizes the polyketide-tyrosyl acyl thioester product which can be reductively off-loaded by the terminal reductase (R) domain in pydA. The alpha/beta hydrolase pydG is then required to catalyze the subsequent Knoevenagel condensation that affords the 3-pyrrolin-2-one ring, whereas the four proteins pydB, pydE, pydX and pydZ then function synergistically to form the cyclophane. PydB and the membrane-bound pydX and pydZ are lipid-binding proteins that can sequester and mold the pdyG product into the inverse S-shape. Binding of the medium chain reductase pydE to the complex would trigger the cascade oxidative cyclization. PydY is involved in the Diels-Alder cycloaddition that forms the decahydrofluorene core. Additional non-enzymatic hydroxylation yields pyrrocidine A2 which can be further reduced into pyrrocidine B by an endogenous reductase. The protein is Epoxidase pydX of Acremonium sp.